The primary structure comprises 384 residues: 1-deoxy-D-xylulose 5-phosphate reductoisomerase (384 aa).

Residues threonine 10, glycine 11, serine 12, isoleucine 13, glycine 36, lysine 37, asparagine 38, and asparagine 121 each coordinate NADPH. Residue lysine 122 participates in 1-deoxy-D-xylulose 5-phosphate binding. Glutamate 123 contacts NADPH. Aspartate 147 serves as a coordination point for Mn(2+). 4 residues coordinate 1-deoxy-D-xylulose 5-phosphate: serine 148, glutamate 149, serine 173, and histidine 196. Glutamate 149 lines the Mn(2+) pocket. Glycine 202 contributes to the NADPH binding site. 1-deoxy-D-xylulose 5-phosphate is bound by residues serine 209, asparagine 214, lysine 215, and glutamate 218. Glutamate 218 lines the Mn(2+) pocket.

The protein belongs to the DXR family. Requires Mg(2+) as cofactor. Mn(2+) is required as a cofactor.

The catalysed reaction is 2-C-methyl-D-erythritol 4-phosphate + NADP(+) = 1-deoxy-D-xylulose 5-phosphate + NADPH + H(+). The protein operates within isoprenoid biosynthesis; isopentenyl diphosphate biosynthesis via DXP pathway; isopentenyl diphosphate from 1-deoxy-D-xylulose 5-phosphate: step 1/6. In terms of biological role, catalyzes the NADPH-dependent rearrangement and reduction of 1-deoxy-D-xylulose-5-phosphate (DXP) to 2-C-methyl-D-erythritol 4-phosphate (MEP). The polypeptide is 1-deoxy-D-xylulose 5-phosphate reductoisomerase (Exiguobacterium sibiricum (strain DSM 17290 / CCUG 55495 / CIP 109462 / JCM 13490 / 255-15)).